The chain runs to 945 residues: Soluble guanylate cyclase gcy-33 (945 aa).

H104 is a binding site for heme. Positions 388–413 form a coiled coil; sequence SEVLTEMTREISEAKKTARTLLTQMM. Positions 437 to 567 constitute a Guanylate cyclase domain; the sequence is SIGFIRVCDF…DTVNTASRME (131 aa). Disordered stretches follow at residues 639–679 and 706–930; these read KEAE…LSGS and QDEN…KCED. The segment covering 661 to 679 has biased composition (low complexity); it reads SLGESIDSSSSRRGSLSGS. Polar residues predominate over residues 711–720; sequence RPPTWSASHS. Residues 721–731 show a composition bias toward basic and acidic residues; it reads QDIRKPRKTES. Positions 732-744 are enriched in polar residues; that stretch reads KITLNSRLSSSDL. Basic and acidic residues-rich tracts occupy residues 750-759 and 766-804; these read ETSKDSDGET and ELKE…DHVS. Residues 763 to 802 adopt a coiled-coil conformation; it reads TSSELKEVNRIREEALAQEKEEERTTKEENQKIEEVGEDH. A compositionally biased stretch (polar residues) spans 817-828; that stretch reads GDNNISFSQMPS. Residues 851-861 show a composition bias toward basic and acidic residues; the sequence is ISKKKLEKEDS. Polar residues predominate over residues 862–884; sequence NSSMSSLDERTTVSAKPTTTRRL. Residues 886 to 896 are compositionally biased toward basic and acidic residues; it reads NQKDLEKEKKR. Positions 898 to 911 are enriched in low complexity; sequence SMAGSSVTSSSAHS. Residues 916–930 show a composition bias toward basic and acidic residues; it reads SKKDTRDKSRCKCED.

This sequence belongs to the adenylyl cyclase class-4/guanylyl cyclase family. In terms of assembly, heterodimer; with other soluble guanylate cyclases. Heme is required as a cofactor. Expressed in BAG sensory neuron.

The protein localises to the cytoplasm. The enzyme catalyses GTP = 3',5'-cyclic GMP + diphosphate. May be regulated by molecular oxygen. Probably not activated by nitric oxide (NO). Its function is as follows. Synthesizes cyclic GMP (cGMP) from GTP. May be involved in sensitivity to quinine by regulating egl-4 activity through the production of cGMP. In Caenorhabditis elegans, this protein is Soluble guanylate cyclase gcy-33 (gcy-33).